An 818-amino-acid chain; its full sequence is MATEEIDMSYWDVSWGEFNEDKNSSIFCESHPHIVNSHGIWEVMTFKRGMNFWEYPLPNLEILIFSTFFIWRLLDISFNKIGLRVPRFTYMMIAGIILGQTCHFSNKSWIHDIFFPDDNRPKVAETLGAFGFVLYWFLKGVTMDAELPFRTEKRSSVIGFITVIIPLICGSLTFRYRERRGDSSILRMEYRLIIFLQSISAFTSIDTLLKDLQIKHSEFGRIALSGAMVTDMLAFGVTFFNAIYYEKLYGFMQTVGFCLFVVVMICVVRPAMYWVIKQTPEGRPVKDFYLYSIFGIAFACFTFFNKVIHLFGPAGSFVFGLTVPNGYPLGTTLIQKFESFNLGSILPLFGSLTMMQVDLLRLFKESGDLIRMEGQIYEVISFILLVNTTKFVVTTITAYAFKMPLRDSFALALVLSNKGIFELAYYTYAVELKLIRPEVFTILAAYTLLNSIFIPMLLELVHDPTKRFRCYRKRNLGILKDGAALQCLMCVYRPDHITSMTDLLETFSPSQDSPMACNILHLVELVGQANPMFISHQLQKPEPGSTSLSDNVIISFRGFQRQFFEYTSLDIFTSVSVSQHMHEDICWLALSRSLSLIVLPFHRTWSVDRSTVISNDDNLRMLNVNVLRRAPCSVGIFVYRKPIVESHMAKSHSKICLIFNGGKDDREALAITNRMRLTEKRTRLTIIRFIPKSSEMDNDEWEQQQSINLKESVTSIVGSNIKENDAKVTYIDKAVSDGSETSRILRAMANDYDLFIVGSGSGIGTEATSGISEWTEFNELGPIGDLLASHEYPSSASVLVVQKQVYIHHTKSQRRKSF.

13 helical membrane passes run 51-71, 88-110, 123-143, 156-176, 192-212, 222-242, 248-268, 288-308, 310-330, 340-360, 376-396, 409-429, and 438-458; these read NFWEYPLPNLEILIFSTFFIW, FTYMMIAGIILGQTCHFSNKSWI, VAETLGAFGFVLYWFLKGVTM, SVIGFITVIIPLICGSLTFRY, LIIFLQSISAFTSIDTLLKDL, IALSGAMVTDMLAFGVTFFNA, LYGFMQTVGFCLFVVVMICVV, FYLYSIFGIAFACFTFFNKVI, LFGPAGSFVFGLTVPNGYPLG, FNLGSILPLFGSLTMMQVDLL, IYEVISFILLVNTTKFVVTTI, FALALVLSNKGIFELAYYTYA, and EVFTILAAYTLLNSIFIPMLL.

It belongs to the monovalent cation:proton antiporter 2 (CPA2) transporter (TC 2.A.37) family. CHX (TC 2.A.37.4) subfamily. Preferentially expressed in pollen.

The protein resides in the membrane. In terms of biological role, may operate as a cation/H(+) antiporter. The protein is Cation/H(+) antiporter 6A (CHX6a) of Arabidopsis thaliana (Mouse-ear cress).